The sequence spans 446 residues: Tubulin beta-8 chain (446 aa).

GTP contacts are provided by Gln11, Glu69, Ser138, Gly142, Thr143, Gly144, Asn204, and Asn226. Residue Glu69 participates in Mg(2+) binding. Residues 426 to 446 (QDATAEDDYDEDDDAAAADEA) are disordered. Over residues 429-446 (TAEDDYDEDDDAAAADEA) the composition is skewed to acidic residues.

It belongs to the tubulin family. Dimer of alpha and beta chains. A typical microtubule is a hollow water-filled tube with an outer diameter of 25 nm and an inner diameter of 15 nM. Alpha-beta heterodimers associate head-to-tail to form protofilaments running lengthwise along the microtubule wall with the beta-tubulin subunit facing the microtubule plus end conferring a structural polarity. Microtubules usually have 13 protofilaments but different protofilament numbers can be found in some organisms and specialized cells. Mg(2+) serves as cofactor. As to expression, expressed in anthers.

The protein localises to the cytoplasm. Its subcellular location is the cytoskeleton. In terms of biological role, tubulin is the major constituent of microtubules, a cylinder consisting of laterally associated linear protofilaments composed of alpha- and beta-tubulin heterodimers. Microtubules grow by the addition of GTP-tubulin dimers to the microtubule end, where a stabilizing cap forms. Below the cap, tubulin dimers are in GDP-bound state, owing to GTPase activity of alpha-tubulin. The chain is Tubulin beta-8 chain (TUBB8) from Oryza sativa subsp. japonica (Rice).